The primary structure comprises 664 residues: Prelamin-A/C (664 aa).

N-acetylmethionine is present on methionine 1. Positions 1–24 (METPSQRRATRSGAQASSTPLSPT) are disordered. The interval 1–33 (METPSQRRATRSGAQASSTPLSPTRITRLQEKE) is head. The tract at residues 1-130 (METPSQRRAT…TKKEGDLMAA (130 aa)) is interaction with MLIP. A Phosphothreonine modification is found at threonine 3. Serine 5 is subject to Phosphoserine. A Phosphothreonine modification is found at threonine 10. Residues serine 12 and serine 18 each carry the phosphoserine modification. Threonine 19 is subject to Phosphothreonine. At serine 22 the chain carries Phosphoserine. An IF rod domain is found at 31–387 (EKEDLQELND…KLLEGEEERL (357 aa)). Lysine 32 carries the post-translational modification N6-acetyllysine; alternate. N6-succinyllysine; alternate is present on lysine 32. A Glycyl lysine isopeptide (Lys-Gly) (interchain with G-Cter in SUMO2); alternate cross-link involves residue lysine 32. The coil 1A stretch occupies residues 34 to 70 (DLQELNDRLAVYIDRVRSLETENAGLRLRITESEEVV). Residues serine 51, serine 66, and serine 71 each carry the phosphoserine modification. Positions 71 to 80 (SREVSGIKSA) are linker 1. Residues lysine 78 and lysine 97 each carry the N6-acetyllysine modification. A coil 1B region spans residues 81–218 (YEAELGDARK…NIYSEELRET (138 aa)). Lysine 97 participates in a covalent cross-link: Glycyl lysine isopeptide (Lys-Gly) (interchain with G-Cter in SUMO2). Serine 107 carries the post-translational modification Phosphoserine. N6-acetyllysine is present on residues lysine 108, lysine 114, lysine 123, lysine 135, lysine 144, and lysine 155. Lysine 171 carries the N6-acetyllysine; alternate modification. Residue lysine 171 is modified to N6-succinyllysine; alternate. Residue lysine 171 forms a Glycyl lysine isopeptide (Lys-Gly) (interchain with G-Cter in SUMO2); alternate linkage. N6-acetyllysine occurs at positions 180, 201, and 208. A Glycyl lysine isopeptide (Lys-Gly) (interchain with G-Cter in SUMO2); alternate cross-link involves residue lysine 201. Lysine 201 participates in a covalent cross-link: Glycyl lysine isopeptide (Lys-Gly) (interchain with G-Cter in SUMO); alternate. Lysine 208 participates in a covalent cross-link: Glycyl lysine isopeptide (Lys-Gly) (interchain with G-Cter in SUMO2). Serine 212 carries the phosphoserine modification. Residues lysine 219 and lysine 233 each participate in a glycyl lysine isopeptide (Lys-Gly) (interchain with G-Cter in SUMO2) cross-link. The tract at residues 219–242 (KRRHETRLVEIDNGKQREFESRLA) is linker 2. N6-acetyllysine is present on residues lysine 233, lysine 260, lysine 265, and lysine 270. The coil 2 stretch occupies residues 243–383 (DALQDLRAQH…HAYRKLLEGE (141 aa)). Residue lysine 260 forms a Glycyl lysine isopeptide (Lys-Gly) (interchain with G-Cter in SUMO2); alternate linkage. Residue lysine 270 forms a Glycyl lysine isopeptide (Lys-Gly) (interchain with G-Cter in SUMO2); alternate linkage. 4 positions are modified to phosphoserine: serine 277, serine 282, serine 301, and serine 307. Residue lysine 311 forms a Glycyl lysine isopeptide (Lys-Gly) (interchain with G-Cter in SUMO2); alternate linkage. Residues lysine 311, lysine 316, and lysine 341 each carry the N6-acetyllysine modification. Residues lysine 366 and lysine 378 each participate in a glycyl lysine isopeptide (Lys-Gly) (interchain with G-Cter in SUMO2) cross-link. A disordered region spans residues 384–442 (EERLRLSPSPTSQRSRGRASSHSSQTQSGGSVTKKRKLESSESRSSFSQHARTSGRVAV). Residues 384 to 664 (EERLRLSPSP…TQSPQNCSIM (281 aa)) are tail. A phosphoserine mark is found at serine 390, serine 392, serine 395, serine 398, serine 403, serine 404, serine 406, serine 407, and serine 414. Positions 403–414 (SSHSSQTQSGGS) are enriched in low complexity. At threonine 416 the chain carries Phosphothreonine. At lysine 417 the chain carries N6-acetyllysine. Glycyl lysine isopeptide (Lys-Gly) (interchain with G-Cter in SUMO2) cross-links involve residues lysine 417 and lysine 420. Residues 417–422 (KKRKLE) carry the Nuclear localization signal motif. 4 positions are modified to phosphoserine: serine 423, serine 426, serine 429, and serine 431. Residues 428–545 (SSFSQHARTS…EEVAMRKLVR (118 aa)) enclose the LTD domain. Lysine 450 participates in a covalent cross-link: Glycyl lysine isopeptide (Lys-Gly) (interchain with G-Cter in SUMO2); alternate. N6-acetyllysine is present on residues lysine 450 and lysine 457. Phosphoserine is present on residues serine 458 and serine 463. Glycyl lysine isopeptide (Lys-Gly) (interchain with G-Cter in SUMO2) cross-links involve residues lysine 470 and lysine 486. Position 486 is an N6-acetyllysine (lysine 486). 2 positions are modified to phosphothreonine: threonine 496 and threonine 505. Phosphoserine is present on residues serine 533 and serine 546. Threonine 548 carries the post-translational modification Phosphothreonine. Residues 555–577 (DEDGDDLLHHHHGSHGSSSGDPA) are disordered. 2 positions are modified to phosphoserine: serine 568 and serine 571. A Glycyl lysine isopeptide (Lys-Gly) (interchain with G-Cter in SUMO2); alternate cross-link involves residue lysine 597. A Glycyl lysine isopeptide (Lys-Gly) (interchain with G-Cter in SUMO1); alternate cross-link involves residue lysine 597. The interval 598 to 620 (ASASSSGAQVGGSISSGSSASSV) is disordered. A phosphoserine mark is found at serine 612, serine 613, serine 616, and serine 619. Serine 625 and serine 628 each carry an O-linked (GlcNAc) serine glycan. A phosphoserine mark is found at serine 628, serine 632, and serine 636. The propeptide at 647 to 661 (LLGNSRPRTQSPQNC) is removed in Lamin-A/C form. A Cysteine methyl ester modification is found at cysteine 661. A lipid anchor (S-farnesyl cysteine) is attached at cysteine 661. Positions 662–664 (SIM) are cleaved as a propeptide — removed in Prelamin-A/C form and in Lamin-A/C form.

Belongs to the intermediate filament family. Homodimer of lamin A and lamin C. Lamin dimers then assemble into dimeric head-to-tail polymers. Ultimately, two head-to-tail polymers assemble laterally into a protofilament with a uniformly shaped rod of 3.5 nm in diameter. Interacts with lamin-associated polypeptides IA, IB and TMPO-alpha, RB1 and with emerin. Interacts with SREBF1, SREBF2, SUN2 and TMEM43. Interacts with TMEM201. Proteolytically processed isoform A interacts with NARF. Interacts with SUN1. Interacts with MLIP. Interacts with DMPK; may regulate nuclear envelope stability. Interacts with SUV39H1; the interaction increases stability of SUV39H1. Interacts with SYNE2. Interacts with ITSN1 isoform 2. Interacts with IFFO1; enables the formation of an interior nucleoskeleton that is recruited to DNA double-strand breaks. As to quaternary structure, interacts with EMD. In terms of assembly, interacts (via C-terminus) with LEMD2 (via N-terminus) (in vitro). In terms of processing, proteolytic cleavage of the C-terminal of 18 residues of prelamin-A/C results in the production of lamin-A/C. The prelamin-A/C maturation pathway includes farnesylation of CAAX motif by protein farnesyltransferase (FNTA and FNTB), removal of the last three amino acids (-AAX) by RCE1/FACE2 and/or ZMPSTE24, methylation of the C-terminal cysteine by ICMT and endoproteolytic removal of the last 15 C-terminal amino acids by ZMPSTE24. Proteolytic cleavage requires prior farnesylation and methylation, and absence of these blocks cleavage. Post-translationally, farnesylation of prelamin-A/C facilitates nuclear envelope targeting. Phosphorylation plays a key role in lamin organization, subcellular localization and nuclear envelope disintegration. Phosphorylation by CDK1 at Ser-22 and Ser-392 at the onset of mitosis drives lamin disassembly and nuclear envelope breakdown. Phosphorylation at Ser-22 and Ser-392 during interphase promotes localization to the nucleoplasm and regulates lamina assembly. Phosphorylation at Ser-22, Ser-392 and Ser-628 during interphase causes redistribution between the nucleus and the cytoplasm. Phosphorylation at Ser-22 by CDK1 regulates matrix stiffness. Phosphorylation status of Ser-22 determines its localization between double-strand break (DSB) sites and the nuclear matrix. Phosphorylated by ATR at Ser-282 in response to DNA damage, leading to lamin disassembly and nuclear envelope rupture. Phosphorylation also regulates stability in micronuclei arising from genome instability: phosphorylation at Ser-395 by ATR in response to genome instability and double-stranded DNA breaks primes LMNA for subsequent phosphorylation at Ser-392 by CDK1 and micronuclei envelope rupture. The rupture of micronuclear envelope triggers the cGAS-STING pathway thereby activating the type I interferon response and innate immunity. In terms of processing, acetylation by KAT8 is required for nuclear architecture. Post-translationally, sumoylation is necessary for the localization to the nuclear envelope.

The protein resides in the nucleus lamina. Its subcellular location is the nucleus envelope. It is found in the nucleus. The protein localises to the nucleoplasm. It localises to the nucleus matrix. Functionally, lamins are intermediate filament proteins that assemble into a filamentous meshwork, and which constitute the major components of the nuclear lamina, a fibrous layer on the nucleoplasmic side of the inner nuclear membrane. Lamins provide a framework for the nuclear envelope, bridging the nuclear envelope and chromatin, thereby playing an important role in nuclear assembly, chromatin organization, nuclear membrane and telomere dynamics. Lamin A and C also regulate matrix stiffness by conferring nuclear mechanical properties. The structural integrity of the lamina is strictly controlled by the cell cycle, as seen by the disintegration and formation of the nuclear envelope in prophase and telophase, respectively. Lamin A and C are present in equal amounts in the lamina of mammals. Also invoved in DNA repair: recruited by DNA repair proteins XRCC4 and IFFO1 to the DNA double-strand breaks (DSBs) to prevent chromosome translocation by immobilizing broken DNA ends. Required for normal development of peripheral nervous system and skeletal muscle and for muscle satellite cell proliferation. Required for osteoblastogenesis and bone formation. Also prevents fat infiltration of muscle and bone marrow, helping to maintain the volume and strength of skeletal muscle and bone. Required for cardiac homeostasis. In terms of biological role, prelamin-A/C can accelerate smooth muscle cell senescence. It acts to disrupt mitosis and induce DNA damage in vascular smooth muscle cells (VSMCs), leading to mitotic failure, genomic instability, and premature senescence. The chain is Prelamin-A/C (LMNA) from Sus scrofa (Pig).